The primary structure comprises 353 residues: Rhodopsin (353 aa).

Over 1–36 the chain is Extracellular; sequence MNGTEGENFYIPFSNKTGLARSPFEYPQYYLAEPWK. N2 and N15 each carry an N-linked (GlcNAc...) asparagine glycan. Residues 37–61 form a helical membrane-spanning segment; sequence YSVLAAYMFFLILVGFPVNFLTLFV. Residues 62–73 are Cytoplasmic-facing; sequence TVQHKKLRTPLN. Residues 74-96 traverse the membrane as a helical segment; that stretch reads YILLNLAVANLFMVLFGFTLTMY. At 97-110 the chain is on the extracellular side; that stretch reads SSMNGYFVFGPTMC. A disulfide bridge links C110 with C187. The chain crosses the membrane as a helical span at residues 111–133; that stretch reads NFEGFFATLGGEMSLWSLVVLAI. Residues 134-136 carry the 'Ionic lock' involved in activated form stabilization motif; it reads ERY. Over 134–152 the chain is Cytoplasmic; the sequence is ERYIVICKPMGNFRFGSTH. Residues 153 to 173 form a helical membrane-spanning segment; that stretch reads AYMGVAFTWFMALSCAAPPLV. The Extracellular portion of the chain corresponds to 174-202; that stretch reads GWSRYLPEGMQCSCGPDYYTLNPNFNNES. A helical transmembrane segment spans residues 203–224; the sequence is FVIYMFLVHFIIPFIVIFFCYG. The Cytoplasmic portion of the chain corresponds to 225-252; that stretch reads RLLCTVKEAAAAQQESASTQKAEKEVTR. A helical transmembrane segment spans residues 253–274; it reads MVVLMVIGFLVCWVPYASVAFY. Residues 275–286 lie on the Extracellular side of the membrane; sequence IFTHQGSDFGAT. The chain crosses the membrane as a helical span at residues 287–308; it reads FMTVPAFFAKTSALYNPIIYIL. N6-(retinylidene)lysine is present on K296. Topologically, residues 309–353 are cytoplasmic; it reads MNKQFRNCMITTLCCGKNPLGDEDSGASTSKTEVSSVSTSQVSPA. The disordered stretch occupies residues 330 to 353; sequence DEDSGASTSKTEVSSVSTSQVSPA. Positions 336 to 353 are enriched in low complexity; that stretch reads STSKTEVSSVSTSQVSPA.

The protein belongs to the G-protein coupled receptor 1 family. Opsin subfamily. Post-translationally, phosphorylated on some or all of the serine and threonine residues present in the C-terminal region. In terms of processing, contains one covalently linked retinal chromophore.

It is found in the membrane. The protein localises to the cell projection. The protein resides in the cilium. It localises to the photoreceptor outer segment. Functionally, photoreceptor required for image-forming vision at low light intensity. While most salt water fish species use retinal as chromophore, most freshwater fish use 3-dehydroretinal, or a mixture of retinal and 3-dehydroretinal. Light-induced isomerization of 11-cis to all-trans retinal triggers a conformational change that activates signaling via G-proteins. Subsequent receptor phosphorylation mediates displacement of the bound G-protein alpha subunit by arrestin and terminates signaling. This Petromyzon marinus (Sea lamprey) protein is Rhodopsin (RHO).